A 311-amino-acid polypeptide reads, in one-letter code: 4-diphosphocytidyl-2-C-methyl-D-erythritol kinase (311 aa).

K9 is an active-site residue. P95–T105 serves as a coordination point for ATP. D137 is an active-site residue.

This sequence belongs to the GHMP kinase family. IspE subfamily.

It carries out the reaction 4-CDP-2-C-methyl-D-erythritol + ATP = 4-CDP-2-C-methyl-D-erythritol 2-phosphate + ADP + H(+). It participates in isoprenoid biosynthesis; isopentenyl diphosphate biosynthesis via DXP pathway; isopentenyl diphosphate from 1-deoxy-D-xylulose 5-phosphate: step 3/6. Its function is as follows. Catalyzes the phosphorylation of the position 2 hydroxy group of 4-diphosphocytidyl-2C-methyl-D-erythritol. This is 4-diphosphocytidyl-2-C-methyl-D-erythritol kinase from Thermosynechococcus vestitus (strain NIES-2133 / IAM M-273 / BP-1).